The sequence spans 252 residues: uncharacterized protein (252 aa).

Positions 1–23 are cleaved as a signal peptide; that stretch reads MKLLKTVPAIVMLAGGMFASLNA. Positions 231 to 252 are disordered; it reads EPPESAPEHTDRRTTLSLGYSM.

This is an uncharacterized protein from Escherichia coli (strain K12).